A 142-amino-acid chain; its full sequence is MKTPRRRMRLAVFKALFQHEFRRDEDLEQILEEILDETYDKKAKEDARRYIRGIKENLPMIDNLISRYLEKWSLNRLSAVDRNVLRLATYELLFEKDIPIEVTIDEAIEIAKRYGTENSGKFVNGILDRIAKEHAPKEKFEL.

This sequence belongs to the NusB family.

Its function is as follows. Involved in transcription antitermination. Required for transcription of ribosomal RNA (rRNA) genes. Binds specifically to the boxA antiterminator sequence of the ribosomal RNA (rrn) operons. This is Transcription antitermination protein NusB from Thermotoga sp. (strain RQ2).